Here is a 273-residue protein sequence, read N- to C-terminus: Type III pantothenate kinase (273 aa).

5-12 (DVGNSHVV) contributes to the ATP binding site. Position 112-115 (112-115 (GTDL)) interacts with substrate. The active-site Proton acceptor is the Asp-114. A K(+)-binding site is contributed by Asp-134. Thr-137 is a binding site for ATP. Thr-189 contacts substrate.

It belongs to the type III pantothenate kinase family. Homodimer. NH4(+) serves as cofactor. K(+) is required as a cofactor.

Its subcellular location is the cytoplasm. It catalyses the reaction (R)-pantothenate + ATP = (R)-4'-phosphopantothenate + ADP + H(+). It participates in cofactor biosynthesis; coenzyme A biosynthesis; CoA from (R)-pantothenate: step 1/5. Its function is as follows. Catalyzes the phosphorylation of pantothenate (Pan), the first step in CoA biosynthesis. The sequence is that of Type III pantothenate kinase from Treponema pallidum (strain Nichols).